A 455-amino-acid chain; its full sequence is Pentatricopeptide repeat-containing protein At3g26630, chloroplastic (455 aa).

The transit peptide at 1–19 (MAAPSPSSPPNLLSPPPFR) directs the protein to the chloroplast. PPR repeat units follow at residues 51-81 (DQLL…LQSP), 82-117 (STFT…QSQF), 118-152 (DKFT…GFFN), 153-187 (DVFF…SIVS), 188-214 (WTTM…MPMR), 215-249 (NVVS…DVKP), 250-284 (NEFT…GFVL), 285-315 (DCFL…MQGK), 316-350 (SLAT…ASVE), 352-387 (DAIT…GISP), and 388-418 (IREH…MDSD).

This sequence belongs to the PPR family. PCMP-A subfamily.

The protein resides in the plastid. Its subcellular location is the chloroplast. This is Pentatricopeptide repeat-containing protein At3g26630, chloroplastic (PCMP-A6) from Arabidopsis thaliana (Mouse-ear cress).